The chain runs to 210 residues: Large ribosomal subunit protein uL3 (210 aa).

Belongs to the universal ribosomal protein uL3 family. Part of the 50S ribosomal subunit. Forms a cluster with proteins L14 and L19.

One of the primary rRNA binding proteins, it binds directly near the 3'-end of the 23S rRNA, where it nucleates assembly of the 50S subunit. The chain is Large ribosomal subunit protein uL3 from Lawsonia intracellularis (strain PHE/MN1-00).